The primary structure comprises 363 residues: 3-dehydroquinate synthase (363 aa).

Residues 134-135 (TT), K147, and K156 each bind NAD(+). Zn(2+) is bound by residues E189, H254, and H271.

It belongs to the sugar phosphate cyclases superfamily. Dehydroquinate synthase family. It depends on Co(2+) as a cofactor. Requires Zn(2+) as cofactor. NAD(+) is required as a cofactor.

The protein localises to the cytoplasm. It catalyses the reaction 7-phospho-2-dehydro-3-deoxy-D-arabino-heptonate = 3-dehydroquinate + phosphate. The protein operates within metabolic intermediate biosynthesis; chorismate biosynthesis; chorismate from D-erythrose 4-phosphate and phosphoenolpyruvate: step 2/7. Catalyzes the conversion of 3-deoxy-D-arabino-heptulosonate 7-phosphate (DAHP) to dehydroquinate (DHQ). This Prochlorococcus marinus (strain MIT 9215) protein is 3-dehydroquinate synthase.